The sequence spans 601 residues: Serine/threonine-protein phosphatase 2A 65 kDa regulatory subunit A beta isoform (601 aa).

A2 is subject to N-acetylalanine. HEAT repeat units follow at residues 20–58 (DSLY…GVER), 59–96 (TRTE…GGPD), 97–135 (FAHC…TPVA), 136–173 (LEAH…ASNA), 174–212 (VKAE…ELDS), 213–251 (VKTE…SQED), 252–290 (LEAL…GPKI), 291–333 (ALSD…RETV), 334–372 (IMNQ…GKEN), 373–411 (TIEH…GIRQ), 412–450 (LSQS…GVEF), 451–489 (FDEK…GTEW), 490–528 (AQNT…GKEI), 529–567 (TTKQ…DTNA), and 568–601 (LQGE…LALA).

Belongs to the phosphatase 2A regulatory subunit A family. In terms of assembly, PP2A consists of a common heterodimeric core enzyme, composed of a 36 kDa catalytic subunit (subunit C) and a 65 kDa constant regulatory subunit (PR65 or subunit A), that associates with a variety of regulatory subunits. Proteins that associate with the core dimer include three families of regulatory subunits B (the R2/B/PR55/B55, R3/B''/PR72/PR130/PR59 and R5/B'/B56 families), the 48 kDa variable regulatory subunit, viral proteins, and cell signaling molecules. Interacts with IPO9. Interacts with SGO1. Interacts with RAF1.

Its function is as follows. The PR65 subunit of protein phosphatase 2A serves as a scaffolding molecule to coordinate the assembly of the catalytic subunit and a variable regulatory B subunit. The sequence is that of Serine/threonine-protein phosphatase 2A 65 kDa regulatory subunit A beta isoform (Ppp2r1b) from Mus musculus (Mouse).